Consider the following 398-residue polypeptide: 2,3,4,5-tetrahydropyridine-2,6-dicarboxylate N-succinyltransferase (398 aa).

Glutamate 268 functions as the Acyl-anhydride intermediate in the catalytic mechanism. Succinyl-CoA-binding positions include arginine 270, glycine 285, serine 288, alanine 311, 326-327 (DG), glycine 334, lysine 361, and 374-377 (RQNS).

This sequence belongs to the type 2 tetrahydrodipicolinate N-succinyltransferase family. In terms of assembly, homotrimer.

Its subcellular location is the cytoplasm. It catalyses the reaction (S)-2,3,4,5-tetrahydrodipicolinate + succinyl-CoA + H2O = (S)-2-succinylamino-6-oxoheptanedioate + CoA. It participates in amino-acid biosynthesis; L-lysine biosynthesis via DAP pathway; LL-2,6-diaminopimelate from (S)-tetrahydrodipicolinate (succinylase route): step 1/3. Catalyzes the conversion of the cyclic tetrahydrodipicolinate (THDP) into the acyclic N-succinyl-L-2-amino-6-oxopimelate using succinyl-CoA. The chain is 2,3,4,5-tetrahydropyridine-2,6-dicarboxylate N-succinyltransferase from Sulfurimonas denitrificans (strain ATCC 33889 / DSM 1251) (Thiomicrospira denitrificans (strain ATCC 33889 / DSM 1251)).